Consider the following 396-residue polypeptide: Elongation factor Tu (396 aa).

Positions 10–206 constitute a tr-type G domain; sequence KPHINVGTIG…QMDAYIPEPQ (197 aa). The tract at residues 19–26 is G1; sequence GHVDHGKT. 19–26 is a GTP binding site; sequence GHVDHGKT. T26 contacts Mg(2+). The tract at residues 60–64 is G2; it reads GITIA. The segment at 81–84 is G3; the sequence is DCPG. GTP-binding positions include 81-85 and 136-139; these read DCPGH and NKAD. Positions 136–139 are G4; that stretch reads NKAD. Residues 174–176 are G5; that stretch reads SAL.

This sequence belongs to the TRAFAC class translation factor GTPase superfamily. Classic translation factor GTPase family. EF-Tu/EF-1A subfamily. In terms of assembly, monomer.

The protein resides in the cytoplasm. The enzyme catalyses GTP + H2O = GDP + phosphate + H(+). In terms of biological role, GTP hydrolase that promotes the GTP-dependent binding of aminoacyl-tRNA to the A-site of ribosomes during protein biosynthesis. The protein is Elongation factor Tu of Nitrosococcus oceani (strain ATCC 19707 / BCRC 17464 / JCM 30415 / NCIMB 11848 / C-107).